Here is a 122-residue protein sequence, read N- to C-terminus: Glycine cleavage system H protein (122 aa).

Residues 19–101 enclose the Lipoyl-binding domain; the sequence is TATIGITKHA…EGNSWLYKIK (83 aa). N6-lipoyllysine is present on Lys-60.

It belongs to the GcvH family. As to quaternary structure, the glycine cleavage system is composed of four proteins: P, T, L and H. The cofactor is (R)-lipoate.

Functionally, the glycine cleavage system catalyzes the degradation of glycine. The H protein shuttles the methylamine group of glycine from the P protein to the T protein. The sequence is that of Glycine cleavage system H protein from Dinoroseobacter shibae (strain DSM 16493 / NCIMB 14021 / DFL 12).